The chain runs to 340 residues: MIFVDACFKKSTPYTPVWMMRQAGRYLPEYMEVRASAGDFLSLCKDYKKASEVTLQPVDILGVDAAIIFSDILVVPLEMGMDLKFEKGEGPVFSNPIKTKEDLERLDVEKSIKNLSYVYDALALTREKLAHDKALIGFCGSPWTIATYMIEGGGSKNYAKCKKLVYQNPEFLHQILSKLTLALKHYIQEQIKAGANAVQIFDSWASALEEEMFFEFSFKYMLEIADFIKEKYPHIPVILFPKGVSGFLDNINGNFDVFGVDWSTPLELAKEKLGAKYTLQGNMEPCRLYDKKAIEVGVDKILNIMQDSAHIFNLGHGILPDIPVENAKYFIKLVQEKSKK.

Substrate is bound by residues 21–25 (RQAGR), D71, Y148, S203, and H316.

The protein belongs to the uroporphyrinogen decarboxylase family. In terms of assembly, homodimer.

The protein resides in the cytoplasm. It catalyses the reaction uroporphyrinogen III + 4 H(+) = coproporphyrinogen III + 4 CO2. It participates in porphyrin-containing compound metabolism; protoporphyrin-IX biosynthesis; coproporphyrinogen-III from 5-aminolevulinate: step 4/4. Functionally, catalyzes the decarboxylation of four acetate groups of uroporphyrinogen-III to yield coproporphyrinogen-III. This chain is Uroporphyrinogen decarboxylase, found in Campylobacter lari (strain RM2100 / D67 / ATCC BAA-1060).